We begin with the raw amino-acid sequence, 286 residues long: Protein Bride of doubletime (286 aa).

Interacts with dco (via nuclear localization signal). Interacts with Ankrd49; interaction promotes the stability of both complex members.

The protein resides in the cytoplasm. Its subcellular location is the cytosol. The protein localises to the cell membrane. Functionally, functions in planar polarity establishment and circadian rhythms by promoting the activity and localization of dco/dbt. Required for regulating the levels of dco/dbt and per in the nuclei of photoreceptor cells and thereby is involved in normal oscillations of the circadian clock proteins in the eye. In the dark, the cry circadian and rhodopsin visual pathways, activate the accumulation of the protein into Arr1- and Arr2-dependent cytosolic foci which are required for dco localization to photoreceptor nuclei. It is possible that the accumulation into foci results in the dissociation of the protein from dco, thus allowing dco to interact with importins and microtubles for nuclear transport. By promoting nuclei localization and kinase activity of dco towards per, it is essential for regulating normal cycles of per nuclear accumulation in brain circadian neurons and thus is important for normal circadian behavior. Essential for regulating the establishment of planar cell polarity in the wing. Forms a complex with Ankrd49 which likely functions in the regulation of planar polarity by promoting the activity of dco during planar polarity establishment. Within the complex, directly promotes dco activity in regulating phosphorylation and asymmetric localization of core planar polarity proteins such as dsh. The protein is Protein Bride of doubletime of Drosophila melanogaster (Fruit fly).